A 905-amino-acid chain; its full sequence is Heme/hemopexin-binding protein (905 aa).

An N-terminal signal peptide occupies residues 1 to 21; the sequence is MYKLNVISLIILTTYTGATYA.

The protein localises to the secreted. Binds heme/hemopexin complexes. The sequence is that of Heme/hemopexin-binding protein (hxuA) from Haemophilus influenzae (strain ATCC 51907 / DSM 11121 / KW20 / Rd).